The primary structure comprises 463 residues: Spermidine/putrescine import ATP-binding protein PotA (463 aa).

The 231-residue stretch at 10 to 240 (IEVSHVSKFF…PINSFVADFI (231 aa)) folds into the ABC transporter domain. 42-49 (GPSGCGKT) serves as a coordination point for ATP.

Belongs to the ABC transporter superfamily. Spermidine/putrescine importer (TC 3.A.1.11.1) family. In terms of assembly, the complex is composed of two ATP-binding proteins (PotA), two transmembrane proteins (PotB and PotC) and a solute-binding protein (PotD).

It is found in the cell inner membrane. It catalyses the reaction ATP + H2O + polyamine-[polyamine-binding protein]Side 1 = ADP + phosphate + polyamineSide 2 + [polyamine-binding protein]Side 1.. Its function is as follows. Part of the ABC transporter complex PotABCD involved in spermidine/putrescine import. Responsible for energy coupling to the transport system. This chain is Spermidine/putrescine import ATP-binding protein PotA, found in Bacteroides thetaiotaomicron (strain ATCC 29148 / DSM 2079 / JCM 5827 / CCUG 10774 / NCTC 10582 / VPI-5482 / E50).